A 57-amino-acid polypeptide reads, in one-letter code: DNA gyrase inhibitor YacG (57 aa).

Zn(2+) contacts are provided by C5, C8, C20, and C24.

The protein belongs to the DNA gyrase inhibitor YacG family. Interacts with GyrB. Zn(2+) is required as a cofactor.

Inhibits all the catalytic activities of DNA gyrase by preventing its interaction with DNA. Acts by binding directly to the C-terminal domain of GyrB, which probably disrupts DNA binding by the gyrase. The protein is DNA gyrase inhibitor YacG of Caulobacter vibrioides (strain ATCC 19089 / CIP 103742 / CB 15) (Caulobacter crescentus).